The following is a 323-amino-acid chain: Aspartate carbamoyltransferase catalytic subunit (323 aa).

Carbamoyl phosphate is bound by residues Arg-71 and Thr-72. Residue Lys-99 coordinates L-aspartate. Residues Arg-121, His-151, and Gln-154 each coordinate carbamoyl phosphate. Positions 184 and 239 each coordinate L-aspartate. Carbamoyl phosphate contacts are provided by Gly-280 and Pro-281.

This sequence belongs to the aspartate/ornithine carbamoyltransferase superfamily. ATCase family. In terms of assembly, heterododecamer (2C3:3R2) of six catalytic PyrB chains organized as two trimers (C3), and six regulatory PyrI chains organized as three dimers (R2).

The catalysed reaction is carbamoyl phosphate + L-aspartate = N-carbamoyl-L-aspartate + phosphate + H(+). The protein operates within pyrimidine metabolism; UMP biosynthesis via de novo pathway; (S)-dihydroorotate from bicarbonate: step 2/3. In terms of biological role, catalyzes the condensation of carbamoyl phosphate and aspartate to form carbamoyl aspartate and inorganic phosphate, the committed step in the de novo pyrimidine nucleotide biosynthesis pathway. The polypeptide is Aspartate carbamoyltransferase catalytic subunit (Ralstonia nicotianae (strain ATCC BAA-1114 / GMI1000) (Ralstonia solanacearum)).